The sequence spans 314 residues: MNISVENPVFVHEDSTTQKTGELRLDSDIPMSKISSDDEVFLAPEMNAFGRQFRDYTDTNSERQKSVEHFYATQHTNQTLDFVQKMRSEYGKLDKMVMNIWECCELSKEVVDESDPDLDEPQIQHLLQSAEAIRKDYPNEDWLHLTALIHDLGKVLTLPQFGGLPQWAVVGDTFPVGCAFDESNVHHKYFMENPDFNNPKYNTKAGIYSEGCGLENVLMSWGHDDYMYLVAKENGSTLPSPGLFIIRYHSFYPLHKAGAYTHLMNEEDKENLKWLHVFNKYDLYSKSKVHVNVEKVKPYYMSLIKKYFPENLRW.

Residues arginine 54 and 112-114 contribute to the substrate site; that span reads DES. Fe cation contacts are provided by histidine 125, histidine 150, and aspartate 151. Substrate is bound by residues lysine 154 and 171–172; that span reads GD. Positions 223, 249, and 282 each coordinate Fe cation. 249–250 serves as a coordination point for substrate; sequence HS.

The protein belongs to the myo-inositol oxygenase family. The cofactor is Fe cation. Expressed in flowers and siliques.

Its subcellular location is the cytoplasm. It catalyses the reaction myo-inositol + O2 = D-glucuronate + H2O + H(+). Its pathway is polyol metabolism; myo-inositol degradation into D-glucuronate; D-glucuronate from myo-inositol: step 1/1. Involved in the biosynthesis of UDP-glucuronic acid (UDP-GlcA), providing nucleotide sugars for cell-wall polymers. May be also involved in plant ascorbate biosynthesis. This chain is Inositol oxygenase 5 (MIOX5), found in Arabidopsis thaliana (Mouse-ear cress).